A 609-amino-acid chain; its full sequence is UvrABC system protein C (609 aa).

The GIY-YIG domain occupies 19-97; sequence ISPGCYLWKS…IKKHNPRFNV (79 aa). The region spanning 208–243 is the UVR domain; it reads ESLVGDLSIKMSASSNRMDFEKAARYRDMLQRIQNF.

Belongs to the UvrC family. Interacts with UvrB in an incision complex.

Its subcellular location is the cytoplasm. Functionally, the UvrABC repair system catalyzes the recognition and processing of DNA lesions. UvrC both incises the 5' and 3' sides of the lesion. The N-terminal half is responsible for the 3' incision and the C-terminal half is responsible for the 5' incision. The protein is UvrABC system protein C of Leptospira borgpetersenii serovar Hardjo-bovis (strain JB197).